Consider the following 178-residue polypeptide: ATP-dependent protease subunit HslV (178 aa).

T7 is an active-site residue. Na(+)-binding residues include G162, C165, and T168.

Belongs to the peptidase T1B family. HslV subfamily. In terms of assembly, a double ring-shaped homohexamer of HslV is capped on each side by a ring-shaped HslU homohexamer. The assembly of the HslU/HslV complex is dependent on binding of ATP.

It localises to the cytoplasm. The catalysed reaction is ATP-dependent cleavage of peptide bonds with broad specificity.. With respect to regulation, allosterically activated by HslU binding. Its function is as follows. Protease subunit of a proteasome-like degradation complex believed to be a general protein degrading machinery. This Cupriavidus pinatubonensis (strain JMP 134 / LMG 1197) (Cupriavidus necator (strain JMP 134)) protein is ATP-dependent protease subunit HslV.